The chain runs to 93 residues: Stromal cell-derived factor 1 (93 aa).

Residues 1–21 (MDIRTLALFSILLGSLCLSEG) form the signal peptide. Positions 22–23 (KP) match the Receptor activation motif motif. The receptor and heparin binding stretch occupies residues 29–33 (RCPCR). Cystine bridges form between cysteine 30-cysteine 55 and cysteine 32-cysteine 71. Heparin-binding positions include 41–51 (KSNIKHLKILS), arginine 62, glutamine 69, and lysine 85. Receptor binding regions lie at residues 48 to 50 (KIL) and 60 to 64 (VARLK).

This sequence belongs to the intercrine alpha (chemokine CxC) family. Monomer or homodimer; in equilibrium. Dimer formation is induced by non acidic pH and the presence of multivalent anions, and by binding to cxcr4 or heparin.

The protein localises to the secreted. In terms of biological role, chemoattractant. Activates the C-X-C chemokine receptor cxcr4 to induce a rapid and transient rise in the level of intracellular calcium ions, and chemotaxis. Signaling with cxcr4 mediates the directional movement of mesodermal cells during gastrulation. Binds to the allosteric site (site 2) of integrins and activates them in a cxcr4-independent manner. The polypeptide is Stromal cell-derived factor 1 (Xenopus tropicalis (Western clawed frog)).